The chain runs to 432 residues: Trigger factor (432 aa).

Residues Glu-161–Pro-246 enclose the PPIase FKBP-type domain.

Belongs to the FKBP-type PPIase family. Tig subfamily.

It is found in the cytoplasm. It catalyses the reaction [protein]-peptidylproline (omega=180) = [protein]-peptidylproline (omega=0). Its function is as follows. Involved in protein export. Acts as a chaperone by maintaining the newly synthesized protein in an open conformation. Functions as a peptidyl-prolyl cis-trans isomerase. This chain is Trigger factor (tig), found in Pasteurella multocida (strain Pm70).